The following is a 259-amino-acid chain: Imidazole glycerol phosphate synthase subunit HisF (259 aa).

Active-site residues include aspartate 11 and aspartate 130.

It belongs to the HisA/HisF family. Heterodimer of HisH and HisF.

The protein localises to the cytoplasm. The catalysed reaction is 5-[(5-phospho-1-deoxy-D-ribulos-1-ylimino)methylamino]-1-(5-phospho-beta-D-ribosyl)imidazole-4-carboxamide + L-glutamine = D-erythro-1-(imidazol-4-yl)glycerol 3-phosphate + 5-amino-1-(5-phospho-beta-D-ribosyl)imidazole-4-carboxamide + L-glutamate + H(+). It functions in the pathway amino-acid biosynthesis; L-histidine biosynthesis; L-histidine from 5-phospho-alpha-D-ribose 1-diphosphate: step 5/9. Its function is as follows. IGPS catalyzes the conversion of PRFAR and glutamine to IGP, AICAR and glutamate. The HisF subunit catalyzes the cyclization activity that produces IGP and AICAR from PRFAR using the ammonia provided by the HisH subunit. This is Imidazole glycerol phosphate synthase subunit HisF from Desulfosudis oleivorans (strain DSM 6200 / JCM 39069 / Hxd3) (Desulfococcus oleovorans).